The chain runs to 1019 residues: Limulus clotting factor C (1019 aa).

Residues 1-25 form the signal peptide; sequence MVLASFLVSGLVLGLLAQKMRPVQS. The EGF-like domain occupies 102 to 137; it reads YGTWCSGECQCKNGGICDQRTGACACRDRYEGVHCE. Cystine bridges form between cysteine 106-cysteine 118, cysteine 112-cysteine 125, cysteine 127-cysteine 136, cysteine 142-cysteine 182, cysteine 168-cysteine 195, cysteine 199-cysteine 241, cysteine 227-cysteine 254, cysteine 260-cysteine 308, cysteine 294-cysteine 321, cysteine 331-cysteine 350, cysteine 354-cysteine 374, cysteine 436-cysteine 447, cysteine 464-cysteine 564, cysteine 538-cysteine 556, cysteine 576-cysteine 621, cysteine 607-cysteine 634, and cysteine 720-cysteine 748. Sushi domains follow at residues 140–197, 198–256, and 258–323; these read KGCP…KCIR, ECAM…QCKN, and VFCP…SCVK. Residues 325–421 form the LCCL domain; that stretch reads ADREVDCDSK…EELKSLARSF (97 aa). Residues 436–568 enclose the C-type lectin domain; it reads CPDGWFEVDE…PSSFACMMDL (133 aa). 2 N-linked (GlcNAc...) asparagine glycosylation sites follow: asparagine 523 and asparagine 534. Sushi domains are found at residues 574–636 and 689–750; these read AKCD…RCIK and PRSS…SCIP. Asparagine 624, asparagine 740, and asparagine 767 each carry an N-linked (GlcNAc...) asparagine glycan. The Peptidase S1 domain occupies 763-1019; sequence IWNGNSTEIG…VFLSWIRQFI (257 aa). The cysteines at positions 794 and 810 are disulfide-linked. Residues histidine 809 and aspartate 865 each act as charge relay system in the active site. The N-linked (GlcNAc...) asparagine glycan is linked to asparagine 912. The cysteines at positions 932 and 951 are disulfide-linked. Aspartate 960 serves as a coordination point for substrate. A disulfide bridge links cysteine 962 with cysteine 996. Serine 966 acts as the Charge relay system in catalysis.

It belongs to the peptidase S1 family. As to quaternary structure, heterodimer of a light chain and a heavy chain linked by a disulfide bond.

It localises to the secreted. It carries out the reaction Selective cleavage of 103-Arg-|-Ser-104 and 124-Ile-|-Ile-125 bonds in Limulus clotting factor B to form activated factor B. Cleavage of -Pro-Arg-|-Xaa- bonds in synthetic substrates.. Activated by Gram-negative bacterial lipopolysaccharides and chymotrypsin. In terms of biological role, this enzyme is closely associated with an endotoxin-sensitive hemolymph coagulation system which may play important roles in both hemostasis and host defense mechanisms. Its active form catalyzes the activation of factor B. In Carcinoscorpius rotundicauda (Mangrove horseshoe crab), this protein is Limulus clotting factor C.